The chain runs to 292 residues: MNFLHQYYQDIIKKKLENLNDKIQCSFEFFPPKNLDTEKKLFSSVVKLSLLKPFLFSVTYGANSGERKKTYSIVQRIHKKTGITTAPHLTCVDASLSELKEIAKFYWENGIRSIVALRGDVPNKSYQHKIYALDLVVLLKKIADFDISVAAYPEIHPESKNAQSDILNLKKKADAGANRAITQFFFNVESYLRFRDNCIKNNINIEIIPGILPIYNFEQLKKFSSMTNVSIPKWMFEMFNGLDEDLETQKIIGSNIVINIVKTLLYEGVKNFHFYTLNKSDVIYSICHMFGL.

Glu-28 (proton donor/acceptor) is an active-site residue. Thr-59 lines the NADH pocket. 13 residues coordinate FAD: Tyr-60, Ala-62, His-88, Arg-118, Gly-119, Asp-120, Ala-132, Tyr-152, His-156, Asp-165, Asn-168, Lys-171, and Lys-172. Asp-120 is a (6S)-5-methyl-5,6,7,8-tetrahydrofolate binding site. Gln-183 provides a ligand contact to NADH. Positions 183, 219, and 279 each coordinate (6S)-5-methyl-5,6,7,8-tetrahydrofolate.

Belongs to the methylenetetrahydrofolate reductase family. The cofactor is FAD.

The enzyme catalyses (6S)-5-methyl-5,6,7,8-tetrahydrofolate + NAD(+) = (6R)-5,10-methylene-5,6,7,8-tetrahydrofolate + NADH + H(+). Its pathway is one-carbon metabolism; tetrahydrofolate interconversion. It participates in amino-acid biosynthesis; L-methionine biosynthesis via de novo pathway. Functionally, catalyzes the NADH-dependent reduction of 5,10-methylenetetrahydrofolate to 5-methyltetrahydrofolate. Is required to provide the methyl group necessary for methionine synthetase to convert homocysteine to methionine; the methyl group is given by 5-methyltetrahydrofolate. This is 5,10-methylenetetrahydrofolate reductase (metF) from Buchnera aphidicola subsp. Schizaphis graminum (strain Sg).